The following is a 382-amino-acid chain: V-type proton ATPase subunit C 1 (382 aa).

Position 2 is an N-acetylthreonine (Thr2).

This sequence belongs to the V-ATPase C subunit family. As to quaternary structure, V-ATPase is a heteromultimeric enzyme made up of two complexes: the ATP-hydrolytic V1 complex and the proton translocation V0 complex. The V1 complex consists of three catalytic AB heterodimers that form a heterohexamer, three peripheral stalks each consisting of EG heterodimers, one central rotor including subunits D and F, and the regulatory subunits C and H. The proton translocation complex V0 consists of the proton transport subunit a, a ring of proteolipid subunits c9c'', rotary subunit d, subunits e and f, and two accessory subunits.

Its function is as follows. Subunit of the V1 complex of vacuolar(H+)-ATPase (V-ATPase), a multisubunit enzyme composed of a peripheral complex (V1) that hydrolyzes ATP and a membrane integral complex (V0) that translocates protons. V-ATPase is responsible for acidifying and maintaining the pH of intracellular compartments and in some cell types, is targeted to the plasma membrane, where it is responsible for acidifying the extracellular environment. Subunit C is necessary for the assembly of the catalytic sector of the enzyme and is likely to have a specific function in its catalytic activity. The protein is V-type proton ATPase subunit C 1 (atp6v1c1) of Xenopus tropicalis (Western clawed frog).